The chain runs to 421 residues: Serine--tRNA ligase (421 aa).

229 to 231 (TAE) provides a ligand contact to L-serine. An ATP-binding site is contributed by 260 to 262 (RAE). Glutamate 283 contacts L-serine. 347 to 350 (EISS) contributes to the ATP binding site. L-serine is bound at residue serine 383.

Belongs to the class-II aminoacyl-tRNA synthetase family. Type-1 seryl-tRNA synthetase subfamily. Homodimer. The tRNA molecule binds across the dimer.

The protein resides in the cytoplasm. The enzyme catalyses tRNA(Ser) + L-serine + ATP = L-seryl-tRNA(Ser) + AMP + diphosphate + H(+). It catalyses the reaction tRNA(Sec) + L-serine + ATP = L-seryl-tRNA(Sec) + AMP + diphosphate + H(+). Its pathway is aminoacyl-tRNA biosynthesis; selenocysteinyl-tRNA(Sec) biosynthesis; L-seryl-tRNA(Sec) from L-serine and tRNA(Sec): step 1/1. In terms of biological role, catalyzes the attachment of serine to tRNA(Ser). Is also able to aminoacylate tRNA(Sec) with serine, to form the misacylated tRNA L-seryl-tRNA(Sec), which will be further converted into selenocysteinyl-tRNA(Sec). The polypeptide is Serine--tRNA ligase (Desulfitobacterium hafniense (strain Y51)).